The sequence spans 93 residues: Small ribosomal subunit protein mS33 (93 aa).

This sequence belongs to the mitochondrion-specific ribosomal protein mS33 family. As to quaternary structure, component of the mitochondrial small ribosomal subunit (mt-SSU). Mature yeast 74S mitochondrial ribosomes consist of a small (37S) and a large (54S) subunit. The 37S small subunit contains a 15S ribosomal RNA (15S mt-rRNA) and at least 32 different proteins. The 54S large subunit contains a 21S rRNA (21S mt-rRNA) and at least 45 different proteins.

It localises to the mitochondrion. In terms of biological role, component of the mitochondrial ribosome (mitoribosome), a dedicated translation machinery responsible for the synthesis of mitochondrial genome-encoded proteins, including at least some of the essential transmembrane subunits of the mitochondrial respiratory chain. The mitoribosomes are attached to the mitochondrial inner membrane and translation products are cotranslationally integrated into the membrane. The polypeptide is Small ribosomal subunit protein mS33 (rsm27) (Schizosaccharomyces pombe (strain 972 / ATCC 24843) (Fission yeast)).